Here is a 103-residue protein sequence, read N- to C-terminus: Cyclotide vibi-I (103 aa).

Residues 1–9 (AAFALPAFA) form the signal peptide. Residues 10–69 (SFEKDVITPAALEAVLNRKAPLSNIMMENDAILNVIANVKTVISNPVLEEALLKTNHGVN) constitute a propeptide that is removed on maturation. Residues 70 to 99 (GIPCGESCVWIPCLTSTVGCSCKSKVCYRN) constitute a cross-link (cyclopeptide (Gly-Asn)). 3 disulfides stabilise this stretch: C73-C89, C77-C91, and C82-C96. A propeptide spanning residues 100 to 103 (SLDN) is cleaved from the precursor.

This is a cyclic peptide.

Functionally, probably participates in a plant defense mechanism. The protein is Cyclotide vibi-I of Viola biflora (Yellow wood violet).